A 581-amino-acid chain; its full sequence is Prolactin receptor (581 aa).

Residues 1 to 24 (MKENAASRVLFILLLFLFASLLNG) form the signal peptide. The Extracellular portion of the chain corresponds to 25-237 (QSPPEKPKLI…NDFPVKDTSM (213 aa)). Fibronectin type-III domains are found at residues 27-127 (PPEK…IVEP) and 129-229 (PPVN…IPND). The cysteines at positions 36 and 46 are disulfide-linked. The N-linked (GlcNAc...) asparagine glycan is linked to Asn59. Cysteines 75 and 86 form a disulfide. Asn132 carries an N-linked (GlcNAc...) asparagine glycan. The Zn(2+) site is built by Asp211 and His212. The short motif at 215 to 219 (WSEWS) is the WSXWS motif element. Residues 238 to 258 (WIFVGVLSAVICLIMVWAVAL) traverse the membrane as a helical segment. At 259–581 (KGYSMVTCIL…SAKKAPPALP (323 aa)) the chain is on the cytoplasmic side. The short motif at 267 to 275 (ILPPVPGPK) is the Box 1 motif element. Composition is skewed to basic and acidic residues over residues 323-349 (QHLM…DTDS) and 375-388 (HIPE…DPET). Disordered regions lie at residues 323–388 (QHLM…DPET) and 462–492 (FKPS…PDQD).

It belongs to the type I cytokine receptor family. Type 1 subfamily. In terms of assembly, interacts with SMARCA1. Interacts with NEK3 and VAV2 and this interaction is prolactin-dependent. In terms of tissue distribution, expressed in all tissues examined; liver, pituitary, adrenal gland, ovary and fetal liver.

Its subcellular location is the membrane. Its function is as follows. This is a receptor for the anterior pituitary hormone prolactin. This Ovis aries (Sheep) protein is Prolactin receptor (PRLR).